Reading from the N-terminus, the 424-residue chain is MKLEMICTGEEVLSGQIVDTNAAWVANTLMELGIEMQHRVTVGDRMDDLVAAFQERSKHADVIIVNGGLGPTSDDMSALAMAKAKGEELVENVQWREHLEDWFTRNNRVMAKSNLKQAWLPASAVMVDNPVGTACGFRVKLNNAWLFFTPGVPFELKHMVTEQFIPFITEEFGVQEKSALEKLLTIGHGESSLADTLSEITLPAGIELGYRSSMPHIEIKIFARGDKAIRQLPDVTKQVKALLGCAVVAENRPTLAAEIHHRLYQSGFSLSVAESCTGGMITSQLIDFAGSSSYLHHGLVTYSNESKVKVLGVNPQILDDHGAVSIPTVEAMAQGVRGILDSDFALATSGIAGPDGGSDDKPVGTVAIALATKHGVYSQMVKLPKRSRQLVRSMSTAIAYDMLRRALLEEAVIVDYPSIPRFAK.

The protein belongs to the CinA family.

The sequence is that of CinA-like protein from Shewanella frigidimarina (strain NCIMB 400).